The primary structure comprises 184 residues: Large ribosomal subunit protein uL22 (184 aa).

Positions 160–184 (PEEEVAQKKKISQKKLKKQKLMARE) are disordered. The span at 167-184 (KKKISQKKLKKQKLMARE) shows a compositional bias: basic residues.

Belongs to the universal ribosomal protein uL22 family. Component of the large ribosomal subunit. Expressed in pancreas, lung, colon, cystic duct, gall bladder, kidney and liver. Expressed at high levels in the well differentiated pancreatic tumor cell lines HPAF, COLO 357 and Capan-1, the moderately differentiated pancreatic tumor cell lines T3M-4, AsPc-1 and BxPc-3, the poorly differentiated pancreatic tumor cell line MIA PaCa-2, and the pancreatic tumor cell lines of undefined differentiation status such as SW979. Expressed at lower levels in the poorly differentiated pancreatic tumor cell lines HCG-25 and PANC-1.

It is found in the cytoplasm. Functionally, component of the large ribosomal subunit. The ribosome is a large ribonucleoprotein complex responsible for the synthesis of proteins in the cell. This is Large ribosomal subunit protein uL22 (RPL17) from Homo sapiens (Human).